We begin with the raw amino-acid sequence, 247 residues long: Probable cyclic nucleotide phosphodiesterase XBJ1_0953 (247 aa).

Aspartate 8, histidine 10, aspartate 52, asparagine 82, histidine 154, histidine 192, and histidine 194 together coordinate Fe cation. AMP-binding positions include histidine 10, aspartate 52, and 82 to 83 (NH). An AMP-binding site is contributed by histidine 194.

Belongs to the cyclic nucleotide phosphodiesterase class-III family. Fe(2+) serves as cofactor.

This is Probable cyclic nucleotide phosphodiesterase XBJ1_0953 from Xenorhabdus bovienii (strain SS-2004) (Xenorhabdus nematophila subsp. bovienii).